The sequence spans 485 residues: PTS system arbutin-, cellobiose-, and salicin-specific EIIBC component (485 aa).

The region spanning 1–88 (MAKNYAALAR…VSLLPGDMQP (88 aa)) is the PTS EIIB type-1 domain. Catalysis depends on cysteine 28, which acts as the Phosphocysteine intermediate; for EIIB activity. Helical transmembrane passes span 102-122 (IGAG…PAII), 147-167 (LTIL…MVAA), 177-197 (MSLA…ELMA), 207-227 (FALI…ALVM), 254-274 (LIVL…GIWI), 285-305 (IHGY…PLLV), 330-350 (VMPS…AVAW), 363-383 (AAAA…GVAI), 389-409 (LIAS…AGLA), and 433-453 (IVWV…LTLL). One can recognise a PTS EIIC type-1 domain in the interval 108-470 (DALIGTMSPL…VEEAAAQARK (363 aa)).

Its subcellular location is the cell inner membrane. The phosphoenolpyruvate-dependent sugar phosphotransferase system (sugar PTS), a major carbohydrate active -transport system, catalyzes the phosphorylation of incoming sugar substrates concomitantly with their translocation across the cell membrane. This system is involved in arbutin, cellobiose, and salicin transport. In Escherichia coli (strain K12), this protein is PTS system arbutin-, cellobiose-, and salicin-specific EIIBC component (ascF).